The sequence spans 448 residues: Protein giant (448 aa).

4 disordered regions span residues M23 to Q47, Q83 to T134, V238 to K259, and I298 to S363. Positions H30–Q47 are enriched in low complexity. A compositionally biased stretch (basic and acidic residues) spans D100–R112. The segment covering P115–T134 has biased composition (low complexity). A compositionally biased stretch (polar residues) spans I298 to N310. Residues S318–S333 are compositionally biased toward low complexity. The region spanning D384 to T447 is the bZIP domain. Residues R390–R406 form a basic motif region. A leucine-zipper region spans residues I407 to I414.

It belongs to the bZIP family. Homodimer or heterodimer. In terms of processing, phosphorylated at multiple sites.

It is found in the nucleus. In terms of biological role, represses the expression of both the krueppel and knirps segmentation gap genes. Binds, in vitro, to the krueppel regulatory elements CD1 and CD2. It is required in the early embryo for the development of portions of the head and abdomen. This Drosophila melanogaster (Fruit fly) protein is Protein giant (gt).